The sequence spans 1587 residues: Sister chromatid cohesion protein mis4 (1587 aa).

The interval 140–172 (PKEKPDASSINTNRSSSDNGFLTPSSSPRSPSC) is disordered. A compositionally biased stretch (polar residues) spans 147 to 162 (SSINTNRSSSDNGFLT). Over residues 163–172 (PSSSPRSPSC) the composition is skewed to low complexity. Serine 183 bears the Phosphoserine mark. HEAT repeat units follow at residues 775–812 (LNLK…IPSI), 814–851 (RTHP…AYRE), 853–888 (IPQI…ATED), 890–927 (NIRV…SPAS), 1101–1140 (ATLM…ARHS), and 1183–1220 (DAYV…RETS).

Belongs to the SCC2/Nipped-B family. As to quaternary structure, interacts with ssl3.

Its subcellular location is the nucleus. It localises to the chromosome. Plays a structural role in chromatin. Chromatid cohesion molecule required for equal sister chromatid separation in anaphase. May form a stable link between chromatids in S phase that is split rather than removed in anaphase. Also required for spindle-kinetochore interaction in early mitosis and inhibit sister chromatid separation until the cleavage of Rad21 in anaphase. In Schizosaccharomyces pombe (strain 972 / ATCC 24843) (Fission yeast), this protein is Sister chromatid cohesion protein mis4 (mis4).